A 138-amino-acid chain; its full sequence is Putative phosphatidylinositol 3,4,5-trisphosphate 3-phosphatase TPTE2P1 (138 aa).

Residues 1 to 75 (MPAAFPCVFP…FAVEILFGMV (75 aa)) enclose the C2 tensin-type domain.

In Homo sapiens (Human), this protein is Putative phosphatidylinositol 3,4,5-trisphosphate 3-phosphatase TPTE2P1 (TPTE2P1).